Here is a 337-residue protein sequence, read N- to C-terminus: Glyceraldehyde-3-phosphate dehydrogenase 1, cytosolic (337 aa).

The binding to NAD stretch occupies residues 1–151; the sequence is MGKIKIGING…YTSDVNIVSN (151 aa). Residues 13–14, Asp-35, and Arg-82 contribute to the NAD(+) site; that span reads RI. The segment at 152-337 is catalytic; sequence ASCTTNCLAP…DLIRHMFKTQ (186 aa). D-glyceraldehyde 3-phosphate-binding positions include 153–155, Thr-184, 213–214, and Arg-236; these read SCT and TG. Cys-154 acts as the Nucleophile in catalysis. Asn-318 contributes to the NAD(+) binding site.

The protein belongs to the glyceraldehyde-3-phosphate dehydrogenase family. In terms of assembly, homotetramer.

It localises to the cytoplasm. It catalyses the reaction D-glyceraldehyde 3-phosphate + phosphate + NAD(+) = (2R)-3-phospho-glyceroyl phosphate + NADH + H(+). The protein operates within carbohydrate degradation; glycolysis; pyruvate from D-glyceraldehyde 3-phosphate: step 1/5. Key enzyme in glycolysis that catalyzes the first step of the pathway by converting D-glyceraldehyde 3-phosphate (G3P) into 3-phospho-D-glyceroyl phosphate. Essential for the maintenance of cellular ATP levels and carbohydrate metabolism. The sequence is that of Glyceraldehyde-3-phosphate dehydrogenase 1, cytosolic (GAPC1) from Zea mays (Maize).